A 147-amino-acid chain; its full sequence is Large ribosomal subunit protein uL15 (147 aa).

The segment at 1 to 62 is disordered; that stretch reads MKLHELKPAQ…GQQPLSRRMP (62 aa). Composition is skewed to gly residues over residues 21–31 and 42–52; these read RGIGSGTGKTS and AGGGVRPGFEG.

The protein belongs to the universal ribosomal protein uL15 family. As to quaternary structure, part of the 50S ribosomal subunit.

Binds to the 23S rRNA. This chain is Large ribosomal subunit protein uL15, found in Desulfitobacterium hafniense (strain DSM 10664 / DCB-2).